The chain runs to 745 residues: Junction plakoglobin (745 aa).

Residue methionine 1 is modified to N-acetylmethionine. Residue threonine 14 is glycosylated (O-linked (GlcNAc) threonine). Serine 99 and serine 125 each carry phosphoserine. ARM repeat units follow at residues 132 to 171 (NYQDDAELATRALPELTKLLNDEDPVVVTKAAMIVNQLSK), 172 to 215 (KEAS…LSHH), 216 to 255 (REGLLAIFKSGGIPALVRMLSSPVESVLFYAITTLHNLLL), 258 to 297 (EGAKMAVRLADGLQKMVPLLNKNNPKFLAITTDCLQLLAY), 298 to 341 (GNQE…LSVC), 342 to 381 (PSNKPAIVEAGGMQALGKHLTSNSPRLVQNCLWTLRNLSD), 383 to 420 (ATKQEGLENVLKILVNQLSVDDVNVLTCATGTLSNLTC), 423 to 464 (SKNK…HLTS), 470 to 510 (EMAQ…NLAL), 512 to 551 (PANHAPLQEAAVIPRLVQLLVKAHQDAQRHVAAGTQQPYT), 574 to 613 (PMNRMEIFRLNTIPLFVQLLYSSVENIQRVAAGVLCELAQ), and 615 to 661 (KEAA…PDYR). An interaction with DSC1 and DSG1 region spans residues 132–297 (NYQDDAELAT…TTDCLQLLAY (166 aa)). Serine 182 carries the post-translational modification Phosphoserine. Residues 574–661 (PMNRMEIFRL…ISEDKNPDYR (88 aa)) form an interaction with DSC1 region. Phosphoserine occurs at positions 665 and 730.

It belongs to the beta-catenin family. Homodimer. Component of an E-cadherin/catenin adhesion complex composed of at least E-cadherin/CDH1 and gamma-catenin/JUP, and possibly alpha-catenin/CTNNA1; the complex is located to adherens junctions. The stable association of CTNNA1 is controversial as CTNNA1 was shown not to bind to F-actin when assembled in the complex. Interacts with MUC1. Interacts with CAV1. Interacts with PTPRJ. Interacts with DSG1. Interacts with DSC1 and DSC2. Interacts with PKP2. Interacts with PKP3 (via N-terminus); the interaction is required for PKP3 localization to desmosome cell-cell junctions. Interacts with DSG4. Post-translationally, may be phosphorylated by FER. In terms of tissue distribution, expressed in the heart (at protein level).

Its subcellular location is the cell junction. It is found in the adherens junction. The protein localises to the desmosome. The protein resides in the cytoplasm. It localises to the cytoskeleton. Its subcellular location is the cell membrane. It is found in the nucleus. Functionally, common junctional plaque protein. The membrane-associated plaques are architectural elements in an important strategic position to influence the arrangement and function of both the cytoskeleton and the cells within the tissue. The presence of plakoglobin in both the desmosomes and in the intermediate junctions suggests that it plays a central role in the structure and function of submembranous plaques. Acts as a substrate for VE-PTP and is required by it to stimulate VE-cadherin function in endothelial cells. Can replace beta-catenin in E-cadherin/catenin adhesion complexes which are proposed to couple cadherins to the actin cytoskeleton. In Rattus norvegicus (Rat), this protein is Junction plakoglobin.